A 176-amino-acid chain; its full sequence is ATP-dependent protease subunit HslV (176 aa).

Residue T2 is part of the active site. Positions 157, 160, and 163 each coordinate Na(+).

Belongs to the peptidase T1B family. HslV subfamily. In terms of assembly, a double ring-shaped homohexamer of HslV is capped on each side by a ring-shaped HslU homohexamer. The assembly of the HslU/HslV complex is dependent on binding of ATP.

Its subcellular location is the cytoplasm. It carries out the reaction ATP-dependent cleavage of peptide bonds with broad specificity.. Its activity is regulated as follows. Allosterically activated by HslU binding. In terms of biological role, protease subunit of a proteasome-like degradation complex believed to be a general protein degrading machinery. The protein is ATP-dependent protease subunit HslV of Erwinia tasmaniensis (strain DSM 17950 / CFBP 7177 / CIP 109463 / NCPPB 4357 / Et1/99).